We begin with the raw amino-acid sequence, 364 residues long: Heavy metal-associated isoprenylated plant protein 35 (364 aa).

Residues 1 to 12 (MATDEMKSETKK) show a composition bias toward basic and acidic residues. The disordered stretch occupies residues 1–33 (MATDEMKSETKKTEHKQKQSTQIKQDLPPPTIP). The region spanning 39–102 (YKSCTLKVSI…KLNKAGKNAE (64 aa)) is the HMA domain. Residues C50 and C53 each contribute to the a metal cation site. Residues 101 to 265 (AEQLPEIPDP…PPTATDYDRP (165 aa)) are disordered. A compositionally biased stretch (basic and acidic residues) spans 111–122 (VDNKPKPVDPKE). A compositionally biased stretch (polar residues) spans 134-144 (QITNEATSSGI). Basic and acidic residues-rich tracts occupy residues 154–169 (ECDKPESEKPVDEKCL) and 180–198 (VKEEKKDVLKEKDSGKEES). The span at 237 to 253 (SLATTNNPTDGPARTQS) shows a compositional bias: polar residues. C361 bears the Cysteine methyl ester mark. C361 carries the S-farnesyl cysteine lipid modification. Residues 362-364 (AIM) constitute a propeptide, removed in mature form.

Belongs to the HIPP family.

Functionally, heavy-metal-binding protein. This is Heavy metal-associated isoprenylated plant protein 35 from Arabidopsis thaliana (Mouse-ear cress).